Reading from the N-terminus, the 43-residue chain is SPbeta prophage-derived uncharacterized protein YopG (43 aa).

The protein is SPbeta prophage-derived uncharacterized protein YopG (yopG) of Bacillus subtilis (strain 168).